The primary structure comprises 509 residues: MSPPLYSVLLEDENSVFLLDLDLSSPMGFHAYPHLPILDSSIANWSLPFSISDETFRESKKLKRTMIPISSADFSISSSSSLSVSVNSIPRLNFRDHIRTYKRYLAAEELPEDTNSSESVVGAEEDGCADGMRLVQLLIACAEAVACRDKAHASMLLSELKSNALVFGSSFQRVASCFVQGLAERLTLIQPIGSGAGVSQSMMNIMDAASEEMEEAYRLVYETCPHIQFGHFVANSTILEAFEGESFVHVVDLGMSLGLPHGHQWRGLIHSLANRASGHGRVRRLRITAIGLCIARLQAIGDELSDYANNLGINLEFSVVQKNLENLQPEDIKVNDDEALVVNSILQLHCVVKESRGALNSVLQMIHGLSPKVLVMVEQDSSHNGPFFLGRFMESLHYYSAIFDSLDAMLPKYDTKRAKMEQFYFAEEIKNIVSCEGPLRMERHERVDQWRRRMSRAGFQAAPIKMVAQAKQWLLKNKICDGYTVVEEKGCLVLGWKSKPIVAASCWKC.

Residues 125–508 (EDGCADGMRL…KPIVAASCWK (384 aa)) enclose the GRAS domain. The leucine repeat I (LRI) stretch occupies residues 132 to 198 (MRLVQLLIAC…IQPIGSGAGV (67 aa)). The segment at 217 to 286 (YRLVYETCPH…SGHGRVRRLR (70 aa)) is VHIID. The VHIID motif lies at 248-252 (VHVVD). The segment at 299–331 (AIGDELSDYANNLGINLEFSVVQKNLENLQPED) is leucine repeat II (LRII). Positions 340–431 (LVVNSILQLH…QFYFAEEIKN (92 aa)) are PFYRE. The SAW stretch occupies residues 434–508 (SCEGPLRMER…KPIVAASCWK (75 aa)).

The protein belongs to the GRAS family. As to quaternary structure, interacts with RAM1 and NSP2. As to expression, expressed in roots under low phosphate (Pi) conditions.

Its subcellular location is the nucleus. Functionally, transcription factor acting as a regulator of arbuscular mycorrhiza (AM)-related genes (e.g. PT4, STR and RAM2). Required for the morphogenesis of arbuscules upon symbiosis with AM fungi (e.g. Rhizophagus irregularis). Also involved in restricting mycorrhizal colonization of the root meristem. This Lotus japonicus (Lotus corniculatus var. japonicus) protein is GRAS family protein RAD1.